We begin with the raw amino-acid sequence, 866 residues long: Coiled-coil domain-containing protein 178 (866 aa).

Positions 1–21 (MPENEKEPAQPTTNEDALDTG) are disordered. Coiled coils occupy residues 157–266 (ELKK…DYMA), 292–403 (EVME…DQYC), 439–480 (KDLT…EEEV), 514–539 (KTEE…LKKL), 570–631 (RRQV…LLKK), and 665–705 (EKCI…REHV).

The chain is Coiled-coil domain-containing protein 178 (Ccdc178) from Mus musculus (Mouse).